The chain runs to 330 residues: 4-hydroxythreonine-4-phosphate dehydrogenase (330 aa).

Thr133 contacts substrate. Residues His161, His206, and His261 each coordinate a divalent metal cation. Substrate is bound by residues Lys269, Asn278, and Arg287.

It belongs to the PdxA family. In terms of assembly, homodimer. It depends on Zn(2+) as a cofactor. The cofactor is Mg(2+). Co(2+) is required as a cofactor.

It is found in the cytoplasm. It catalyses the reaction 4-(phosphooxy)-L-threonine + NAD(+) = 3-amino-2-oxopropyl phosphate + CO2 + NADH. Its pathway is cofactor biosynthesis; pyridoxine 5'-phosphate biosynthesis; pyridoxine 5'-phosphate from D-erythrose 4-phosphate: step 4/5. Functionally, catalyzes the NAD(P)-dependent oxidation of 4-(phosphooxy)-L-threonine (HTP) into 2-amino-3-oxo-4-(phosphooxy)butyric acid which spontaneously decarboxylates to form 3-amino-2-oxopropyl phosphate (AHAP). This is 4-hydroxythreonine-4-phosphate dehydrogenase from Xylella fastidiosa (strain Temecula1 / ATCC 700964).